The chain runs to 586 residues: A-type ATP synthase subunit A (586 aa).

232–239 serves as a coordination point for ATP; the sequence is GPFGSGKT.

Belongs to the ATPase alpha/beta chains family. In terms of assembly, has multiple subunits with at least A(3), B(3), C, D, E, F, H, I and proteolipid K(x).

The protein resides in the cell membrane. The enzyme catalyses ATP + H2O + 4 H(+)(in) = ADP + phosphate + 5 H(+)(out). Its function is as follows. Component of the A-type ATP synthase that produces ATP from ADP in the presence of a proton gradient across the membrane. The A chain is the catalytic subunit. The sequence is that of A-type ATP synthase subunit A from Methanococcus maripaludis (strain C5 / ATCC BAA-1333).